The sequence spans 233 residues: C-type lectin domain family 2 member D2 (233 aa).

A disordered region spans residues 1-34; the sequence is MPSSAHLQDAPPLLSRTLTQDEEQTSLRQSSSCG. Over 1–76 the chain is Cytoplasmic; the sequence is MPSSAHLQDA…SPESPAKLPC (76 aa). Residues 77 to 97 traverse the membrane as a helical; Signal-anchor for type II membrane protein segment; the sequence is CYGVIMVLSVAVVALSVALSV. Residues 98–233 lie on the Extracellular side of the membrane; that stretch reads KKTPQILTVK…KPNSYTSQCQ (136 aa). One can recognise a C-type lectin domain in the interval 119-228; sequence VGNKCYYFNE…KSICSKPNSY (110 aa). An N-linked (GlcNAc...) asparagine glycan is attached at N132.

The protein resides in the cell membrane. Lectin-type cell surface receptor. This Rattus norvegicus (Rat) protein is C-type lectin domain family 2 member D2 (Clec2d2).